A 317-amino-acid polypeptide reads, in one-letter code: Aquaporin-2 (317 aa).

Residues 1–75 (MSLRDDLTIN…RSQEFKMQHR (75 aa)) are Cytoplasmic-facing. The helical transmembrane segment at 76–96 (EFLAEFIGTLILVLLTCGFCA) threads the bilayer. At 97-108 (EQTLNIEKSKSW) the chain is on the extracellular side. Residues 109-129 (LTSSLGSGLSVLIGICVAGHV) traverse the membrane as a helical segment. The Cytoplasmic segment spans residues 130-154 (SGGHLNPAITIAFWVFSGFPIRKVP). Positions 135–137 (NPA) match the NPA 1 motif. A helical membrane pass occupies residues 155–175 (MYITAQLLGAFSGAALLYSIV). Residues 176–208 (EPAISQFDHGKRQILGELGTAGIFGTYPPLYVG) lie on the Extracellular side of the membrane. Residues 209-229 (TGSAVASEVVGTAMLLLVVMV) form a helical membrane-spanning segment. The Cytoplasmic portion of the chain corresponds to 230-242 (TGHPNNLPFRTAQ). A helical membrane pass occupies residues 243-263 (GAMIALGVTTISLCIGYTSGF). Topologically, residues 264–295 (SLNPARDFGPRLFTAVAGWGIDVFTVHHYYAL) are extracellular. The NPA 2 signature appears at 266 to 268 (NPA). A helical membrane pass occupies residues 296–316 (VPMFAPILGGLAGGFIYTVFI). Position 317 (aspartate 317) is a topological domain, cytoplasmic.

This sequence belongs to the MIP/aquaporin (TC 1.A.8) family.

It localises to the cell membrane. It carries out the reaction H2O(in) = H2O(out). The enzyme catalyses glycerol(in) = glycerol(out). Functionally, water channel required to facilitate the transport of water across membranes. Contributes to water uptake of spores during the early stages of spore germination. Aquaporins AQP1 and AQP2 act as extracellular pH sensors and enable the spores to hydrate under favorable conditions and to commence germination. Wounded vegetables and fruit present acidic pH, so the optimal pH range for germination is adapted to the relevant host pH. This Rhizopus delemar (strain RA 99-880 / ATCC MYA-4621 / FGSC 9543 / NRRL 43880) (Mucormycosis agent) protein is Aquaporin-2.